We begin with the raw amino-acid sequence, 214 residues long: Pyridoxine/pyridoxamine 5'-phosphate oxidase (214 aa).

Residues 9–12 and Lys-67 each bind substrate; that span reads RLDY. Residues 62–67, 77–78, Lys-84, and Gln-106 each bind FMN; these read RMVLLK and FT. Residues Tyr-124, Arg-128, and Ser-132 each contribute to the substrate site. Residues 141–142 and Trp-186 each bind FMN; that span reads QS. Position 192–194 (192–194) interacts with substrate; that stretch reads RLH. An FMN-binding site is contributed by Arg-196.

This sequence belongs to the pyridoxamine 5'-phosphate oxidase family. As to quaternary structure, homodimer. Requires FMN as cofactor.

The catalysed reaction is pyridoxamine 5'-phosphate + O2 + H2O = pyridoxal 5'-phosphate + H2O2 + NH4(+). It catalyses the reaction pyridoxine 5'-phosphate + O2 = pyridoxal 5'-phosphate + H2O2. It functions in the pathway cofactor metabolism; pyridoxal 5'-phosphate salvage; pyridoxal 5'-phosphate from pyridoxamine 5'-phosphate: step 1/1. Its pathway is cofactor metabolism; pyridoxal 5'-phosphate salvage; pyridoxal 5'-phosphate from pyridoxine 5'-phosphate: step 1/1. In terms of biological role, catalyzes the oxidation of either pyridoxine 5'-phosphate (PNP) or pyridoxamine 5'-phosphate (PMP) into pyridoxal 5'-phosphate (PLP). The protein is Pyridoxine/pyridoxamine 5'-phosphate oxidase of Microcystis aeruginosa (strain NIES-843 / IAM M-2473).